Reading from the N-terminus, the 230-residue chain is MTQDELKRLVGQAAADYVIQNVPEGAVIGVGTGSTANCFIDALAAVKSRYRGAVSSSVATTERLKSHGIKVFDLNEIDALQVYVDGADEIDASGAMIKGGGGALTREKIVASVADTFVCIADGSKRVPVLGAFPLPIEVVPMARTAIGRRVAALGGVPVLRVTKDGAPYITDNGNEIIDVKGLQIAEPRAFEAKVNAWPGVVTVGLFAERGANLCLLGTENGVETIIYPA.

Substrate contacts are provided by residues 32–35 (TGST), 85–88 (DGAD), and 98–101 (KGGG). Glu-107 serves as the catalytic Proton acceptor. Lys-125 contacts substrate.

The protein belongs to the ribose 5-phosphate isomerase family. Homodimer.

The catalysed reaction is aldehydo-D-ribose 5-phosphate = D-ribulose 5-phosphate. The protein operates within carbohydrate degradation; pentose phosphate pathway; D-ribose 5-phosphate from D-ribulose 5-phosphate (non-oxidative stage): step 1/1. In terms of biological role, catalyzes the reversible conversion of ribose-5-phosphate to ribulose 5-phosphate. This Burkholderia vietnamiensis (strain G4 / LMG 22486) (Burkholderia cepacia (strain R1808)) protein is Ribose-5-phosphate isomerase A.